The chain runs to 252 residues: Enolase-phosphatase E1 (252 aa).

Mg(2+) is bound by residues D14 and E16. Substrate is bound by residues 143–144 (SS) and K177. Residue D202 participates in Mg(2+) binding.

Belongs to the HAD-like hydrolase superfamily. MasA/MtnC family. As to quaternary structure, monomer. Requires Mg(2+) as cofactor.

It is found in the cytoplasm. The protein resides in the nucleus. It carries out the reaction 5-methylsulfanyl-2,3-dioxopentyl phosphate + H2O = 1,2-dihydroxy-5-(methylsulfanyl)pent-1-en-3-one + phosphate. Its pathway is amino-acid biosynthesis; L-methionine biosynthesis via salvage pathway; L-methionine from S-methyl-5-thio-alpha-D-ribose 1-phosphate: step 3/6. The protein operates within amino-acid biosynthesis; L-methionine biosynthesis via salvage pathway; L-methionine from S-methyl-5-thio-alpha-D-ribose 1-phosphate: step 4/6. Its function is as follows. Bifunctional enzyme that catalyzes the enolization of 2,3-diketo-5-methylthiopentyl-1-phosphate (DK-MTP-1-P) into the intermediate 2-hydroxy-3-keto-5-methylthiopentenyl-1-phosphate (HK-MTPenyl-1-P), which is then dephosphorylated to form the acireductone 1,2-dihydroxy-3-keto-5-methylthiopentene (DHK-MTPene). This Drosophila pseudoobscura pseudoobscura (Fruit fly) protein is Enolase-phosphatase E1.